We begin with the raw amino-acid sequence, 502 residues long: Xylulose kinase (502 aa).

82-83 serves as a coordination point for substrate; it reads MH. Catalysis depends on Asp-240, which acts as the Proton acceptor.

Belongs to the FGGY kinase family.

It catalyses the reaction D-xylulose + ATP = D-xylulose 5-phosphate + ADP + H(+). In terms of biological role, catalyzes the phosphorylation of D-xylulose to D-xylulose 5-phosphate. The polypeptide is Xylulose kinase (Levilactobacillus brevis (Lactobacillus brevis)).